Reading from the N-terminus, the 932-residue chain is MAARGGAERAAGAGDGRRGQRRHLRPGRVLAALRGPAAPGAGGARAALAAALLWATWALLLAAPAAGRPATTPPAPPPEEAASPAPPASPSPPGPDGDDAASPDNSTDVRAALRLAQAAGENSRFFVCPPPSGATVVRLAPARPCPEYGLGRNYTEGIGVIYKENIAPYTFKAYIYKNVIVTTTWAGSTYAAITNQYTDRVPVGMGEITDLVDKKWRCLSKAEYLRSGRKVVAFDRDDDPWEAPLKPARLSAPGVRGWHTTDDVYTALGSAGLYRTGTSVNCIVEEVEARSVYPYDSFALSTGDIIYMSPFYGLREGAHREHTSYSPERFQQIEGYYKRDMATGRRLKEPVSRNFLRTQHVTVAWDWVPKRKNVCSLAKWREADEMLRDESRGNFRFTARSLSATFVSDSHTFALQNVPLSDCVIEEAEAAVERVYRERYNGTHVLSGSLETYLARGGFVVAFRPMLSNELAKLYLQELARSNGTLEGLFAAAAPKPGPRRARRAAPSAPGGPGAANGPAGDGDAGGRVTTVSSAEFAALQFTYDHIQDHVNTMFSRLATSWCLLQNKERALWAEAAKLNPSAAASAALDRRAAARMLGDAMAVTYCHELGEGRVFIENSMRAPGGVCYSRPPVSFAFGNESEPVEGQLGEDNELLPGRELVEPCTANHKRYFRFGADYVYYENYAYVRRVPLAELEVISTFVDLNLTVLEDREFLPLEVYTRAELADTGLLDYSEIQRRNQLHELRFYDIDRVVKTDGNMAIMRGLANFFQGLGAVGQAVGTVVLGAAGAALSTVSGIASFIANPFGALATGLLVLAGLVAAFLAYRYISRLRSNPMKALYPITTRALKDDARGATAPGEEEEEFDAAKLEQAREMIKYMSLVSAVERQEHKAKKSNKGGPLLATRLTQLALRRRAPPEYQQLPMADVGGA.

The span at 1 to 12 shows a compositional bias: low complexity; the sequence is MAARGGAERAAG. 2 disordered regions span residues 1-25 and 67-105; these read MAAR…RHLR and GRPA…SPDN. The N-terminal stretch at 1-62 is a signal peptide; sequence MAARGGAERA…LWATWALLLA (62 aa). Over 63 to 806 the chain is Virion surface; sequence APAAGRPATT…SGIASFIANP (744 aa). The span at 71–95 shows a compositional bias: pro residues; it reads TTPPAPPPEEAASPAPPASPSPPGP. Residues N105 and N153 are each glycosylated (N-linked (GlcNAc...) asparagine; by host). 5 cysteine pairs are disulfide-bonded: C128–C607, C145–C563, C218–C282, C375–C423, and C628–C665. Involved in fusion and/or binding to host membrane regions lie at residues 184-190 and 269-276; these read TWAGSTY and GSAGLYRT. N-linked (GlcNAc...) asparagine; by host glycosylation is found at N441 and N483. The interval 492-527 is disordered; the sequence is AAAPKPGPRRARRAAPSAPGGPGAANGPAGDGDAGG. Residues 511–526 show a composition bias toward gly residues; it reads GGPGAANGPAGDGDAG. Residues N640 and N706 are each glycosylated (N-linked (GlcNAc...) asparagine; by host). 2 hydrophobic membrane proximal region regions span residues 751–804 and 784–804; these read IDRV…SFIA and VVLG…SFIA. A helical membrane pass occupies residues 807 to 827; it reads FGALATGLLVLAGLVAAFLAY. Over 828–932 the chain is Intravirion; the sequence is RYISRLRSNP…QLPMADVGGA (105 aa). Residues 880-883 carry the Golgi targeting motif; that stretch reads YMSL. An Internalization motif motif is present at residues 921 to 924; that stretch reads YQQL.

It belongs to the herpesviridae glycoprotein B family. As to quaternary structure, homotrimer; disulfide-linked. Binds to heparan sulfate proteoglycans. Interacts with gH/gL heterodimer. Post-translationally, a proteolytic cleavage by host furin generates two subunits that remain linked by disulfide bonds.

It is found in the virion membrane. Its subcellular location is the host cell membrane. It localises to the host endosome membrane. The protein resides in the host Golgi apparatus membrane. Its function is as follows. Envelope glycoprotein that forms spikes at the surface of virion envelope. Essential for the initial attachment to heparan sulfate moieties of the host cell surface proteoglycans. Involved in fusion of viral and cellular membranes leading to virus entry into the host cell. Following initial binding to its host receptors, membrane fusion is mediated by the fusion machinery composed at least of gB and the heterodimer gH/gL. May be involved in the fusion between the virion envelope and the outer nuclear membrane during virion egress. This Bos taurus (Bovine) protein is Envelope glycoprotein B.